The sequence spans 697 residues: Protein no-on-transient A (697 aa).

Residues 1 to 29 (MENSVKMDNSGNSTPLPQRQRRANNQPNK) show a composition bias toward polar residues. The segment at 1–253 (MENSVKMDNS…GGNNSQRGDD (253 aa)) is disordered. The segment covering 61–80 (NGGGGSVVGGGGGGGGGGGQ) has biased composition (gly residues). 2 stretches are compositionally biased toward low complexity: residues 102–118 (RGGN…NQNQ) and 139–191 (ANNA…QNQA). The span at 195–223 (RGGGGGGGGGGGGGGGGGGGGGGGGGGGG) shows a compositional bias: gly residues. Basic and acidic residues predominate over residues 224–233 (GRDRNPDRRG). Gly residues predominate over residues 234–246 (GGGGGGQNSGGGN). RRM domains lie at 285 to 357 (NRLY…FAPN) and 359 to 445 (TILR…DDND). Residues 488 to 586 (DLFKSKQDAL…DMRRRQQENT (99 aa)) adopt a coiled-coil conformation. Residues 551 to 565 (EMRKREEETMRRHQT) show a composition bias toward basic and acidic residues. Disordered stretches follow at residues 551–575 (EMRK…VRQE) and 601–697 (QEGF…RRRF). The segment covering 603–622 (GFGGGNGGGGGGGGGGGGVG) has biased composition (gly residues). 2 stretches are compositionally biased toward low complexity: residues 623–635 (NSNF…NSNS) and 642–659 (GNNN…GANN).

Functionally, required for normal vision and courtship behavior in Drosophila. The sequence is that of Protein no-on-transient A (nonA) from Drosophila virilis (Fruit fly).